Reading from the N-terminus, the 457-residue chain is Multidrug resistance protein MdtK (457 aa).

Helical transmembrane passes span 11–31, 53–73, 93–113, 127–147, 160–180, 188–208, 243–263, 276–296, 314–334, 350–370, 387–407, and 418–438; these read LLAL…MGFV, IWLP…PVIA, WLAG…GYII, AVGY…FQVA, GMVM…IFIY, LGGI…FIAM, LPIA…ALLV, IALN…AAVT, AART…IFTV, VVAL…SDSI, IFFI…YILA, and PAGF…LMML.

This sequence belongs to the multi antimicrobial extrusion (MATE) (TC 2.A.66.1) family. MdtK subfamily.

The protein resides in the cell inner membrane. Functionally, multidrug efflux pump that functions probably as a Na(+)/drug antiporter. The polypeptide is Multidrug resistance protein MdtK (Salmonella agona (strain SL483)).